The following is a 495-amino-acid chain: Putative lon protease homolog (495 aa).

ATP is bound at residue 52 to 59; that stretch reads GPPGVGKS. The disordered stretch occupies residues 471 to 495; it reads YSSETTGSQRDSTYNYANMDDRSYE. Over residues 472–486 the composition is skewed to polar residues; it reads SSETTGSQRDSTYNY.

Belongs to the peptidase S16 family.

In Thermoplasma volcanium (strain ATCC 51530 / DSM 4299 / JCM 9571 / NBRC 15438 / GSS1), this protein is Putative lon protease homolog.